The chain runs to 177 residues: Large ribosomal subunit protein uL6 (177 aa).

Belongs to the universal ribosomal protein uL6 family. In terms of assembly, part of the 50S ribosomal subunit.

Functionally, this protein binds to the 23S rRNA, and is important in its secondary structure. It is located near the subunit interface in the base of the L7/L12 stalk, and near the tRNA binding site of the peptidyltransferase center. The protein is Large ribosomal subunit protein uL6 of Rhodopseudomonas palustris (strain BisA53).